A 326-amino-acid chain; its full sequence is DNA-directed RNA polymerase subunit alpha (326 aa).

Residues 1 to 231 (MQTALLKPKI…DQLSVFAALE (231 aa)) are alpha N-terminal domain (alpha-NTD). Residues 247-326 (IDPILLRPVD…ENWPPAGLEK (80 aa)) are alpha C-terminal domain (alpha-CTD).

It belongs to the RNA polymerase alpha chain family. In terms of assembly, homodimer. The RNAP catalytic core consists of 2 alpha, 1 beta, 1 beta' and 1 omega subunit. When a sigma factor is associated with the core the holoenzyme is formed, which can initiate transcription.

It catalyses the reaction RNA(n) + a ribonucleoside 5'-triphosphate = RNA(n+1) + diphosphate. Its function is as follows. DNA-dependent RNA polymerase catalyzes the transcription of DNA into RNA using the four ribonucleoside triphosphates as substrates. The polypeptide is DNA-directed RNA polymerase subunit alpha (Ralstonia nicotianae (strain ATCC BAA-1114 / GMI1000) (Ralstonia solanacearum)).